An 822-amino-acid chain; its full sequence is Sodium/hydrogen exchanger 1 (822 aa).

Topologically, residues 1 to 102 are extracellular; it reads MMLRWSGIWG…FPVLDIDYLH (102 aa). Positions 41–73 are disordered; it reads SPTANTIRGAEPPRERSIGDVTTAPSEPVHHPD. The helical transmembrane segment at 103-125 threads the bilayer; sequence VRTPFEISLWILLACLMKIGFHV. The Cytoplasmic portion of the chain corresponds to 126–134; the sequence is IPTISSIVP. The chain crosses the membrane as a helical span at residues 135-152; that stretch reads ESCLLIVVGLLVGGLIKG. Residues 153-162 are Extracellular-facing; sequence VGETPPFLQS. A helical membrane pass occupies residues 163–180; the sequence is DVFFLFLLPPIILDAGYF. The Cytoplasmic segment spans residues 181 to 190; sequence LPLRQFTENL. A helical membrane pass occupies residues 191-219; that stretch reads GTILIFAVVGTLWNAFFLGGLLYAVCLVG. Residues 220–226 lie on the Extracellular side of the membrane; that stretch reads GEQINNI. The helical transmembrane segment at 227 to 253 threads the bilayer; the sequence is GLLDTLLFGSIISAVDPVAVVAVFEEI. At 254 to 256 the chain is on the cytoplasmic side; sequence HIN. The helical transmembrane segment at 257–287 threads the bilayer; that stretch reads ELLHILVFGESLLNDAVTVVLYHLFEEFANY. The Extracellular portion of the chain corresponds to 288 to 291; sequence DSIG. The chain crosses the membrane as a helical span at residues 292–326; the sequence is ISDIFLGFLSFFVVALGGVFVGVVYGVIAAFTSRF. Residues 327–332 are Cytoplasmic-facing; that stretch reads TSHIRV. The chain crosses the membrane as a helical span at residues 333 to 345; it reads IEPLFVFLYSYMA. The Extracellular segment spans residues 346-354; it reads YLSAELFHL. The helical transmembrane segment at 355-375 threads the bilayer; sequence SGIMALIASGVVMRPYVEANI. The Cytoplasmic segment spans residues 376–377; that stretch reads SH. The helical transmembrane segment at 378–408 threads the bilayer; sequence KSHTTIKYFLKMWSSVSETLIFIFLGVSTVA. The Extracellular portion of the chain corresponds to 409–414; that stretch reads GSHQWN. Residues 415-442 traverse the membrane as a helical segment; it reads WTFVISTLLFCLIARVLGVLVLTWFINK. At 443–448 the chain is on the cytoplasmic side; sequence FRIVKL. Residues 449–473 form a helical membrane-spanning segment; the sequence is TPKDQFIIAYGGLRGAIAFSLGYLM. Over 474 to 479 the chain is Extracellular; the sequence is DKKHFP. Residues 480 to 509 form a helical membrane-spanning segment; it reads MCDLFLTAIITVIFFTVFVQGMTIRPLVDL. Residues 507–549 are interaction with TESC; it reads VDLLAVKKKQETKRSINEEIHTQFLDHLLTGIEDICGHYGHHH. Topologically, residues 510 to 822 are cytoplasmic; that stretch reads LAVKKKQETK…EGEPFIPKGE (313 aa). The interval 513 to 520 is PI(4,5)P2-binding region; sequence KKKQETKR. Residues 519-549 are interaction with CHP2; the sequence is KRSINEEIHTQFLDHLLTGIEDICGHYGHHH. Residues 544 to 549 are confers pH-dependent PI(4,5)P2 binding; that stretch reads HYGHHH. The segment at 556–564 is PI(4,5)P2-binding region; sequence RFNKKYVKK. 2 positions are modified to phosphoserine: Ser-603 and Ser-606. Thr-607 is modified (phosphothreonine). Ser-609 and Ser-652 each carry phosphoserine. Residues 637 to 822 are interaction with TESC; the sequence is KILRSNLQKT…EGEPFIPKGE (186 aa). An interaction with CALM1 region spans residues 637 to 822; that stretch reads KILRSNLQKT…EGEPFIPKGE (186 aa). An interaction with PPP3CA region spans residues 688 to 691; sequence LTVP. Ser-697, Ser-701, and Ser-707 each carry phosphoserine. An interaction with PPP3CA region spans residues 719–724; sequence PVITID. A phosphoserine mark is found at Ser-727, Ser-730, and Ser-733. Positions 752–822 are disordered; it reads PTRLTRGEED…EGEPFIPKGE (71 aa). The residue at position 756 (Thr-756) is a Phosphothreonine. Positions 759–768 are enriched in acidic residues; sequence EEDEDEDEDG. The residue at position 786 (Thr-786) is a Phosphothreonine. Residues Ser-792, Ser-794, and Ser-803 each carry the phosphoserine modification.

This sequence belongs to the monovalent cation:proton antiporter 1 (CPA1) transporter (TC 2.A.36) family. In terms of assembly, homodimer; dimerization is crucial for its function. Oligomer. Interacts with CALM in a calcium-dependent manner. Interacts with TESC. Interacts (via the juxtamembrane region of the cytoplasmic C-terminal domain) with CHP1; the interaction occurs at the plasma membrane in a calcium-dependent manner. Interacts with CHP2; the interaction occurs in a calcium-dependent manner. Interacts with EZR; regulates the cytoskeletal interactions of SLC9A1 and promotes stress fiber formation. Ubiquitinated, leading to its degradation by the proteasome. Ubiquitination is reduced by CHP1. Post-translationally, O-glycosylated. In terms of processing, palmitoylated; may play a major role in SLC9A1 regulation. Phosphorylation at Thr-786 increases SLC9A1 activity. Specifically dephosphorylated at Thr-786 by PPP3CA that negatively regulates SLC9A1 activity. Phosphorylation at Ser-652 by AKT1 reduces SLC9A1 binding to CALM1.

It is found in the cell membrane. Its subcellular location is the basolateral cell membrane. It carries out the reaction Na(+)(in) + H(+)(out) = Na(+)(out) + H(+)(in). The enzyme catalyses Li(+)(out) + H(+)(in) = Li(+)(in) + H(+)(out). It catalyses the reaction Li(+)(in) + Na(+)(out) = Li(+)(out) + Na(+)(in). With respect to regulation, activated at acidic pHs. Inhibited by amiloride and 5-amino-substituted derivatives. Inhibited by cariporide and eniporide. Phosphatidylinositol 4,5-bisphosphate (PI(4,5)P2) and phosphatidylinositol 3,4,5-trisphosphate (PI(3,4,5)P3) bind and differentially regulate SLC9A1 activity. Functionally, electroneutral Na(+) /H(+) antiporter that extrudes Na(+) in exchange for external protons driven by the inward sodium ion chemical gradient, protecting cells from acidification that occurs from metabolism. Exchanges intracellular H(+) ions for extracellular Na(+) in 1:1 stoichiometry. Plays a key role in maintening intracellular pH neutral and cell volume, and thus is important for cell growth, proliferation, migration and survival. In addition, can transport lithium Li(+) and also functions as a Na(+)/Li(+) antiporter. SLC9A1 also functions in membrane anchoring and organization of scaffolding complexes that coordinate signaling inputs. This chain is Sodium/hydrogen exchanger 1 (SLC9A1), found in Cricetulus griseus (Chinese hamster).